The sequence spans 210 residues: MNLLAVRDLAVARGGLRAVEGVCFNLNAGGALVLRGPNGIGKTTLLRTLAGLQPLVSGVIEAAPDAIAYAGHSDGLKPALTVTENLRFWAEIFGGRNIDAALEAMNLRDLANRPAHALSAGQKRRLGLARLMVTGRPVWLLDEPTVSLDRDSVALFAAMLRAHLGRGGAAVIATHIDLGLPEAEILELGPFRASELRRQSRPAGFNEAFG.

Residues 4–207 (LAVRDLAVAR…RQSRPAGFNE (204 aa)) form the ABC transporter domain. 36–43 (GPNGIGKT) lines the ATP pocket.

It belongs to the ABC transporter superfamily. CcmA exporter (TC 3.A.1.107) family. In terms of assembly, the complex is composed of two ATP-binding proteins (CcmA) and two transmembrane proteins (CcmB).

It localises to the cell inner membrane. The enzyme catalyses heme b(in) + ATP + H2O = heme b(out) + ADP + phosphate + H(+). Its function is as follows. Part of the ABC transporter complex CcmAB involved in the biogenesis of c-type cytochromes; once thought to export heme, this seems not to be the case, but its exact role is uncertain. Responsible for energy coupling to the transport system. This chain is Cytochrome c biogenesis ATP-binding export protein CcmA, found in Paracoccus denitrificans (strain Pd 1222).